Reading from the N-terminus, the 1687-residue chain is Gag-Pol polyprotein (1687 aa).

Gly-2 carries the N-myristoyl glycine; by host lipid modification. Disordered regions lie at residues 107–126 (GQDN…SRLP), 136–195 (LLSE…STVA), 420–447 (HKRE…DRRQ), and 466–485 (GRQA…EGRP). The PTAP/PSAP motif motif lies at 108–111 (QDNG). The span at 139 to 153 (EPPPYPTSPPPPPAP) shows a compositional bias: pro residues. A PPXY motif motif is present at residues 140-143 (PPPY). Positions 408–453 (LQDLIKEAEKVYHKRETEEEKQEREKKETEERERRRDRRQEKNLTK) form a coiled coil. The segment at 490-507 (DQCAYCKERGHWARECPR) adopts a CCHC-type zinc-finger fold. Residues 544 to 614 (TEFLVDTGAE…CPAPLLGRDL (71 aa)) form the Peptidase A2 domain. The active-site Protease; shared with dimeric partner is the Asp-549. Residues 721–912 (LDLGILVPCQ…EEVTYLGYLL (192 aa)) form the Reverse transcriptase domain. Residues Asp-789, Asp-863, Asp-864, Asp-1162, Glu-1200, Asp-1221, and Asp-1291 each contribute to the Mg(2+) site. Residues 1153-1299 (LPGVPAWYTD…ADEAAKQAAQ (147 aa)) form the RNase H type-1 domain. Residues 1339–1377 (HQLTHLGPDKLLQLVGRTSFHIPNLQSVVREITSKCQVC) form an HHCC-type zinc finger. The Integrase catalytic domain maps to 1394 to 1552 (RGDRPGVYWE…TPYEILHGGP (159 aa)). Mg(2+) is bound by residues Asp-1405 and Asp-1464.

In terms of assembly, homohexamer; further associates as homomultimer. The virus core is composed of a lattice formed from hexagonal rings, each containing six capsid monomers. As to quaternary structure, interacts (via PPXY motif) with host NEDD4. Interacts (via PSAP motif) with host TSG101. The reverse transcriptase is a monomer (Potential). Interacts (via RNase domains) with host release factor ETF1; this interaction is essential for translational readthrough of amber codon between viral gag and pol genes, as well as for viral replication. In terms of assembly, homodimer. Mg(2+) serves as cofactor. Post-translationally, specific enzymatic cleavages by the viral protease yield mature proteins. The protease is released by autocatalytic cleavage. The polyprotein is cleaved during and after budding, this process is termed maturation. In terms of processing, phosphorylated on serine residues.

The protein localises to the virion. It is found in the host cell membrane. The protein resides in the host late endosome membrane. It localises to the host endosome. Its subcellular location is the host multivesicular body. The protein localises to the host cytoplasm. It catalyses the reaction DNA(n) + a 2'-deoxyribonucleoside 5'-triphosphate = DNA(n+1) + diphosphate. The enzyme catalyses Endonucleolytic cleavage to 5'-phosphomonoester.. Its activity is regulated as follows. Protease: Most efficiently inhibited by Amprenavir, which is able to block Gag-Pol processing in infected cells. Functionally, plays a role in budding and is processed by the viral protease during virion maturation outside the cell. During budding, it recruits, in a PPXY-dependent or independent manner, Nedd4-like ubiquitin ligases that conjugate ubiquitin molecules to Gag-Pol, or to Gag-Pol binding host factors. Interaction with HECT ubiquitin ligases probably links the viral protein to the host ESCRT pathway and facilitates release. Its function is as follows. Targets Gag and gag-pol polyproteins to the plasma membrane via a multipartite membrane binding signal, that includes its myristoylated N-terminus. Also mediates nuclear localization of the pre-integration complex. In terms of biological role, constituent of the pre-integration complex (PIC) which tethers the latter to mitotic chromosomes. This allows the integration of the viral genome into the host DNA. Forms the spherical core of the virion that encapsulates the genomic RNA-nucleocapsid complex. Functionally, involved in the packaging and encapsidation of two copies of the genome. Binds with high affinity to conserved UCUG elements within the packaging signal, located near the 5'-end of the genome. This binding is dependent on genome dimerization. Acts as a nucleic acid chaperone which is involved in rearrangement of nucleic acid secondary structures during gRNA retrotranscription. Its function is as follows. Protease: The aspartyl protease mediates proteolytic cleavages of Gag and Gag-Pol polyproteins during or shortly after the release of the virion from the plasma membrane. Cleavages take place as an ordered, step-wise cascade to yield mature proteins. This process is called maturation. Displays maximal activity during the budding process just prior to particle release from the cell. In terms of biological role, reverse transcriptase/ribonuclease H: RT is a multifunctional enzyme that converts the viral dimeric RNA genome into dsDNA in the cytoplasm, shortly after virus entry into the cell. This enzyme displays a DNA polymerase activity that can copy either DNA or RNA templates, and a ribonuclease H (RNase H) activity that cleaves the RNA strand of RNA-DNA heteroduplexes in a partially processive 3' to 5' endonucleasic mode. Conversion of viral genomic RNA into dsDNA requires many steps. A tRNA binds to the primer-binding site (PBS) situated at the 5' end of the viral RNA. RT uses the 3' end of the tRNA primer to perform a short round of RNA-dependent minus-strand DNA synthesis. The reading proceeds through the U5 region and ends after the repeated (R) region which is present at both ends of viral RNA. The portion of the RNA-DNA heteroduplex is digested by the RNase H, resulting in a ssDNA product attached to the tRNA primer. This ssDNA/tRNA hybridizes with the identical R region situated at the 3' end of viral RNA. This template exchange, known as minus-strand DNA strong stop transfer, can be either intra- or intermolecular. RT uses the 3' end of this newly synthesized short ssDNA to perform the RNA-dependent minus-strand DNA synthesis of the whole template. RNase H digests the RNA template except for a polypurine tract (PPT) situated at the 5' end of the genome. It is not clear if both polymerase and RNase H activities are simultaneous. RNase H probably can proceed both in a polymerase-dependent (RNA cut into small fragments by the same RT performing DNA synthesis) and a polymerase-independent mode (cleavage of remaining RNA fragments by free RTs). Secondly, RT performs DNA-directed plus-strand DNA synthesis using the PPT that has not been removed by RNase H as primers. PPT and tRNA primers are then removed by RNase H. The 3' and 5' ssDNA PBS regions hybridize to form a circular dsDNA intermediate. Strand displacement synthesis by RT to the PBS and PPT ends produces a blunt ended, linear dsDNA copy of the viral genome that includes long terminal repeats (LTRs) at both ends. Catalyzes viral DNA integration into the host chromosome, by performing a series of DNA cutting and joining reactions. This enzyme activity takes place after virion entry into a cell and reverse transcription of the RNA genome in dsDNA. The first step in the integration process is 3' processing. This step requires a complex comprising the viral genome, matrix protein and integrase. This complex is called the pre-integration complex (PIC). The integrase protein removes 2 nucleotides from each 3' end of the viral DNA, leaving recessed CA OH's at the 3' ends. In the second step that requires cell division, the PIC enters cell nucleus. In the third step, termed strand transfer, the integrase protein joins the previously processed 3' ends to the 5' ends of strands of target cellular DNA at the site of integration. The last step is viral DNA integration into host chromosome. This is Gag-Pol polyprotein (pro-pol) from Phascolarctos cinereus (Koala).